Here is a 156-residue protein sequence, read N- to C-terminus: Ribosome maturation factor RimP (156 aa).

Belongs to the RimP family.

The protein localises to the cytoplasm. Its function is as follows. Required for maturation of 30S ribosomal subunits. This is Ribosome maturation factor RimP from Bacillus thuringiensis (strain Al Hakam).